A 436-amino-acid polypeptide reads, in one-letter code: Acetyl-CoA decarbonylase/synthase complex subunit delta (436 aa).

The protein belongs to the CdhD family. As to quaternary structure, heterodimer of delta and gamma chains. The ACDS complex is made up of alpha, epsilon, beta, gamma and delta chains with a probable stoichiometry of (alpha(2)epsilon(2))(4)-beta(8)-(gamma(1)delta(1))(8).

Its pathway is one-carbon metabolism; methanogenesis from acetate. Its function is as follows. Part of a complex that catalyzes the reversible cleavage of acetyl-CoA, allowing growth on acetate as sole source of carbon and energy. Probably maintains the overall quaternary structure of the ACDS complex. The polypeptide is Acetyl-CoA decarbonylase/synthase complex subunit delta (Methanosarcina mazei (strain ATCC BAA-159 / DSM 3647 / Goe1 / Go1 / JCM 11833 / OCM 88) (Methanosarcina frisia)).